Here is a 101-residue protein sequence, read N- to C-terminus: Small ribosomal subunit protein uS14 (101 aa).

A disordered region spans residues 51–70 (LPRDSSPSRQRNRCSQTGRP). A compositionally biased stretch (polar residues) spans 52-68 (PRDSSPSRQRNRCSQTG).

It belongs to the universal ribosomal protein uS14 family. Part of the 30S ribosomal subunit. Contacts proteins S3 and S10.

Functionally, binds 16S rRNA, required for the assembly of 30S particles and may also be responsible for determining the conformation of the 16S rRNA at the A site. The chain is Small ribosomal subunit protein uS14 from Mannheimia succiniciproducens (strain KCTC 0769BP / MBEL55E).